The chain runs to 279 residues: RNases MRP/P 32.9 kDa subunit (279 aa).

Position 64 is a phosphoserine (Ser-64).

This sequence belongs to the eukaryotic/archaeal RNase P protein component 1 family. As to quaternary structure, component of nuclear RNase P and RNase MRP complexes. RNase P consists of an RNA moiety and at least 9 protein subunits including POP1, POP3, POP4, POP5, POP6, POP7, POP8, RPP1 and RPR2. RNase MRP complex consists of an RNA moiety and at least 10 protein subunits including POP1, POP3, POP4, POP5, POP6, POP7, POP8, RMP1, RPP1 and SNM1, many of which are shared with the RNase P complex.

It is found in the nucleus. Required for 5.8S rRNA and tRNA processing; associated with RNase MRP and RNase P. The polypeptide is RNases MRP/P 32.9 kDa subunit (POP4) (Saccharomyces cerevisiae (strain ATCC 204508 / S288c) (Baker's yeast)).